The following is a 640-amino-acid chain: Choline O-acetyltransferase (640 aa).

Residues 1 to 22 (MPDLEKDMQKKEKDSRSKDEPA) show a composition bias toward basic and acidic residues. Residues 1–28 (MPDLEKDMQKKEKDSRSKDEPAVPKLPV) are disordered. The Proton acceptor role is filled by histidine 334. CoA contacts are provided by residues 412–424 (GKEFIKKQKTSPD), serine 450, and glutamine 551.

The protein belongs to the carnitine/choline acetyltransferase family. In terms of tissue distribution, detected in brain and in embryonic retina.

The catalysed reaction is choline + acetyl-CoA = acetylcholine + CoA. Its function is as follows. Catalyzes the reversible synthesis of acetylcholine (ACh) from acetyl CoA and choline at cholinergic synapses. This chain is Choline O-acetyltransferase (CHAT), found in Gallus gallus (Chicken).